A 313-amino-acid chain; its full sequence is Olfactory receptor 56A4 (313 aa).

Topologically, residues 1–28 are extracellular; that stretch reads MASPSNDSTAPVSEFLLICFPNFQSWQH. Asn-6 is a glycosylation site (N-linked (GlcNAc...) asparagine). Residues 29 to 49 traverse the membrane as a helical segment; sequence WLSLPLSLLFLLAMGANTTLL. The Cytoplasmic segment spans residues 50–57; sequence ITIQLEAS. A helical membrane pass occupies residues 58-78; that stretch reads LHQPLYYLLSLLSLLDIVLCL. Topologically, residues 79–102 are extracellular; it reads TVIPKVLAIFWFDLRSISFPACFL. Cys-100 and Cys-192 are oxidised to a cystine. Residues 103 to 123 traverse the membrane as a helical segment; the sequence is QMFIMNSFLTMESCTFMVMAY. The Cytoplasmic segment spans residues 124–142; that stretch reads DRYVAICHPLRYPSIITDQ. A helical transmembrane segment spans residues 143 to 163; that stretch reads FVARAVVFVIARNAFVSLPVP. The Extracellular segment spans residues 164 to 199; it reads MLSARLRYCAGNIIKNCICSNLSVSKLSCDDITFNQ. N-linked (GlcNAc...) asparagine glycosylation occurs at Asn-184. The helical transmembrane segment at 200 to 220 threads the bilayer; the sequence is LYQFVAGWTLLGSDLILIVIS. Over 221–240 the chain is Cytoplasmic; the sequence is YSFILKVVLRIKAEGAVAKA. Residues 241 to 261 traverse the membrane as a helical segment; it reads LSTCGSHFILILFFSTVLLVL. Topologically, residues 262–276 are extracellular; the sequence is VITNLARKRIPPDVP. The chain crosses the membrane as a helical span at residues 277-297; it reads ILLNILHHLIPPALNPIVYGV. Topologically, residues 298–313 are cytoplasmic; that stretch reads RTKEIKQGIQNLLKRL.

It belongs to the G-protein coupled receptor 1 family.

It localises to the cell membrane. Its function is as follows. Odorant receptor. This Homo sapiens (Human) protein is Olfactory receptor 56A4 (OR56A4).